A 34-amino-acid polypeptide reads, in one-letter code: Photosystem II reaction center protein M (34 aa).

A helical transmembrane segment spans residues 5–25; that stretch reads ILGLIATTLFILIPTSFLLIL.

This sequence belongs to the PsbM family. As to quaternary structure, PSII is composed of 1 copy each of membrane proteins PsbA, PsbB, PsbC, PsbD, PsbE, PsbF, PsbH, PsbI, PsbJ, PsbK, PsbL, PsbM, PsbT, PsbX, PsbY, PsbZ, Psb30/Ycf12, at least 3 peripheral proteins of the oxygen-evolving complex and a large number of cofactors. It forms dimeric complexes.

It is found in the plastid. It localises to the chloroplast thylakoid membrane. One of the components of the core complex of photosystem II (PSII). PSII is a light-driven water:plastoquinone oxidoreductase that uses light energy to abstract electrons from H(2)O, generating O(2) and a proton gradient subsequently used for ATP formation. It consists of a core antenna complex that captures photons, and an electron transfer chain that converts photonic excitation into a charge separation. This subunit is found at the monomer-monomer interface. The sequence is that of Photosystem II reaction center protein M from Pleurastrum terricola (Filamentous green alga).